The sequence spans 429 residues: Mannose-6-phosphate isomerase (429 aa).

Residues Gln-109, His-111, Glu-136, and His-281 each coordinate Zn(2+). Residue Arg-300 is part of the active site.

It belongs to the mannose-6-phosphate isomerase type 1 family. It depends on Zn(2+) as a cofactor.

It localises to the cytoplasm. The catalysed reaction is D-mannose 6-phosphate = D-fructose 6-phosphate. It functions in the pathway nucleotide-sugar biosynthesis; GDP-alpha-D-mannose biosynthesis; alpha-D-mannose 1-phosphate from D-fructose 6-phosphate: step 1/2. Its function is as follows. Involved in the synthesis of the GDP-mannose and dolichol-phosphate-mannose required for a number of critical mannosyl transfer reactions. In Eremothecium gossypii (strain ATCC 10895 / CBS 109.51 / FGSC 9923 / NRRL Y-1056) (Yeast), this protein is Mannose-6-phosphate isomerase (PMI1).